Here is a 518-residue protein sequence, read N- to C-terminus: Major facilitator superfamily domain-containing protein 8 (518 aa).

The tract at residues 1 to 20 (MAGLRNESEQEPLLGDTPGS) is disordered. At 1–40 (MAGLRNESEQEPLLGDTPGSREWDILETEEHYKSRWRSIR) the chain is on the cytoplasmic side. The short motif at 13 to 14 (LL) is the Dileucine internalization motif element. Residues 41–61 (ILYLTMFLSSVGFSVVMMSIW) form a helical membrane-spanning segment. Residues 62–74 (PYLQKIDPTADTS) are Extracellular-facing. The chain crosses the membrane as a helical span at residues 75-95 (FLGWVIASYSLGQMVASPIFG). At 96–105 (LWSNYRPRKE) the chain is on the cytoplasmic side. The chain crosses the membrane as a helical span at residues 106–126 (PLIVSILISVAANCLYAYLHI). Residues 127–131 (PASHN) are Extracellular-facing. A helical transmembrane segment spans residues 132 to 152 (KYYMLVARGLLGIGAGNVAVV). The Cytoplasmic segment spans residues 153-173 (RSYTAGATSLQERTSSMANIS). A helical transmembrane segment spans residues 174–194 (MCQALGFILGPVFQTCFTFLG). Over 195–211 (EKGVTWDVIKLQINMYT) the chain is Extracellular. The chain crosses the membrane as a helical span at residues 212–232 (TPVLLSAFLGILNIILILAIL). Residues 233–266 (REHRVDDSGRQCKSINFEEASTDEAQVPQGNIDQ) lie on the Cytoplasmic side of the membrane. The chain crosses the membrane as a helical span at residues 267-287 (VAVVAINVLFFVTLFIFALFE). Over 288-304 (TIITPLTMDMYAWTQEQ) the chain is Extracellular. The chain crosses the membrane as a helical span at residues 305–325 (AVLYNGIILAALGVEAVVIFL). Topologically, residues 326 to 337 (GVKLLSKKIGER) are cytoplasmic. The chain crosses the membrane as a helical span at residues 338–358 (AILLGGLIVVWVGFFILLPWG). Residues 359–412 (NQFPKIQWEDLHNNSIPNTTFGEIIIGLWKSPMEDDNERPTGCSIEQAWCLYTP) are Extracellular-facing. N-linked (GlcNAc...) asparagine glycosylation is found at Asn-371 and Asn-376. Residues 413–433 (VIHLAQFLTSAVLIGLGYPVC) traverse the membrane as a helical segment. Residues 434–451 (NLMSYTLYSKILGPKPQG) lie on the Cytoplasmic side of the membrane. A helical transmembrane segment spans residues 452-472 (VYMGWLTASGSGARILGPMFI). At 473-482 (SQVYAHWGPR) the chain is on the extracellular side. The helical transmembrane segment at 483–503 (WAFSLVCGIIVLTITLLGVVY) threads the bilayer. Topologically, residues 504-518 (KRLIALSVRYGRIQE) are cytoplasmic.

The protein belongs to the major facilitator superfamily. In terms of tissue distribution, expressed at very low levels in all tissues tested.

It is found in the endosome membrane. The protein localises to the lysosome membrane. It catalyses the reaction chloride(in) = chloride(out). The catalysed reaction is iodide(out) = iodide(in). It carries out the reaction fluoride(in) = fluoride(out). With respect to regulation, inhibited by chloride channel blockers 4,4'-diisothiocyano-2,2'-stilbenedisulfonate (DIDS), niflumic acid (NFA), and 5-Nitro-2-(3-phenylpropylamino) benzoic acid (NPPB). Outward-rectifying chloride channel involved in endolysosomal chloride homeostasis, membrane fusion and function. Conducts chloride currents up to hundreds of picoamperes. Regulates lysosomal calcium content by reducing the lysosomal membrane potential, thereby activating TRPML1 channel and further release of lysosomal calcium ions. Regulates the pH in endolysosomal compartments and may contribute to progressive acidification from endosome to lysosome. Permeable to other halides such as iodide and fluoride ions. The sequence is that of Major facilitator superfamily domain-containing protein 8 from Homo sapiens (Human).